The chain runs to 971 residues: Translation initiation factor IF-2 (971 aa).

The span at histidine 49–lysine 63 shows a compositional bias: basic and acidic residues. Disordered regions lie at residues histidine 49–isoleucine 86 and aspartate 101–glutamate 385. A compositionally biased stretch (low complexity) spans glycine 105–alanine 114. The span at glutamate 121–alanine 177 shows a compositional bias: basic and acidic residues. Over residues lysine 178–glutamine 209 the composition is skewed to low complexity. Over residues aspartate 210–arginine 261 the composition is skewed to basic and acidic residues. Pro residues predominate over residues proline 277–proline 286. A compositionally biased stretch (low complexity) spans lysine 298–alanine 325. A compositionally biased stretch (gly residues) spans serine 355 to lysine 368. The region spanning proline 471–lysine 640 is the tr-type G domain. Residues glycine 480–threonine 487 form a G1 region. Glycine 480–threonine 487 lines the GTP pocket. The segment at glycine 505 to histidine 509 is G2. Positions aspartate 526–glycine 529 are G3. Residues aspartate 526–histidine 530 and asparagine 580–aspartate 583 each bind GTP. The interval asparagine 580–aspartate 583 is G4. Residues serine 616 to lysine 618 form a G5 region.

It belongs to the TRAFAC class translation factor GTPase superfamily. Classic translation factor GTPase family. IF-2 subfamily.

Its subcellular location is the cytoplasm. Functionally, one of the essential components for the initiation of protein synthesis. Protects formylmethionyl-tRNA from spontaneous hydrolysis and promotes its binding to the 30S ribosomal subunits. Also involved in the hydrolysis of GTP during the formation of the 70S ribosomal complex. This chain is Translation initiation factor IF-2, found in Burkholderia ambifaria (strain ATCC BAA-244 / DSM 16087 / CCUG 44356 / LMG 19182 / AMMD) (Burkholderia cepacia (strain AMMD)).